We begin with the raw amino-acid sequence, 546 residues long: Alpha-taxilin (546 aa).

2 disordered regions span residues 1–170 (MKNQ…GLGK) and 482–546 (NKRV…SARA). A compositionally biased stretch (polar residues) spans 11–21 (AKQSNPKSSPG). Composition is skewed to basic and acidic residues over residues 70–80 (DVSEELSRQLE) and 143–158 (EEIR…DHRR). The residue at position 72 (S72) is a Phosphoserine. The stretch at 186–491 (EEKLAALCKK…NKRVQDLSAG (306 aa)) forms a coiled coil. A Phosphoserine modification is found at S515. Polar residues predominate over residues 530 to 546 (TEASGQTGPQEPTSARA).

The protein belongs to the taxilin family. Binds to the C-terminal coiled coil region of syntaxin family members STX1A, STX3A and STX4A, but not when these proteins are complexed with SNAP25, VAMP2 or STXBP1, suggesting that it interacts with syntaxins that do not form the SNARE complex. As to expression, ubiquitous, with much higher expression in heart, kidney, liver and pancreas.

Functionally, may be involved in intracellular vesicle traffic and potentially in calcium-dependent exocytosis in neuroendocrine cells. The polypeptide is Alpha-taxilin (TXLNA) (Homo sapiens (Human)).